Consider the following 430-residue polypeptide: Enolase (430 aa).

Glutamine 167 is a binding site for (2R)-2-phosphoglycerate. Glutamate 209 (proton donor) is an active-site residue. 3 residues coordinate Mg(2+): aspartate 245, glutamate 286, and aspartate 313. (2R)-2-phosphoglycerate contacts are provided by lysine 338, arginine 367, serine 368, and lysine 389. The active-site Proton acceptor is lysine 338.

This sequence belongs to the enolase family. It depends on Mg(2+) as a cofactor.

The protein localises to the cytoplasm. It is found in the secreted. It localises to the cell surface. The enzyme catalyses (2R)-2-phosphoglycerate = phosphoenolpyruvate + H2O. It functions in the pathway carbohydrate degradation; glycolysis; pyruvate from D-glyceraldehyde 3-phosphate: step 4/5. In terms of biological role, catalyzes the reversible conversion of 2-phosphoglycerate (2-PG) into phosphoenolpyruvate (PEP). It is essential for the degradation of carbohydrates via glycolysis. This Synechococcus sp. (strain CC9605) protein is Enolase.